Here is a 93-residue protein sequence, read N- to C-terminus: Small ribosomal subunit protein uS19 (93 aa).

It belongs to the universal ribosomal protein uS19 family.

Its function is as follows. Protein S19 forms a complex with S13 that binds strongly to the 16S ribosomal RNA. The protein is Small ribosomal subunit protein uS19 of Mycobacterium tuberculosis (strain ATCC 25177 / H37Ra).